Reading from the N-terminus, the 324-residue chain is Phospho-N-acetylmuramoyl-pentapeptide-transferase (324 aa).

10 helical membrane passes run 5-25 (VILF…PIFI), 52-72 (PTMG…VMTM), 77-97 (VSMN…LGFL), 117-137 (LIGQ…QGMP), 147-167 (LSFD…VGGS), 176-196 (LDGL…ILAW), 203-223 (VAIF…FNAH), 227-247 (VFMG…IAIL), 250-270 (LEIL…SVIL), and 302-322 (VVVT…YIEV).

This sequence belongs to the glycosyltransferase 4 family. MraY subfamily. Mg(2+) is required as a cofactor.

The protein localises to the cell membrane. It carries out the reaction UDP-N-acetyl-alpha-D-muramoyl-L-alanyl-gamma-D-glutamyl-meso-2,6-diaminopimeloyl-D-alanyl-D-alanine + di-trans,octa-cis-undecaprenyl phosphate = di-trans,octa-cis-undecaprenyl diphospho-N-acetyl-alpha-D-muramoyl-L-alanyl-D-glutamyl-meso-2,6-diaminopimeloyl-D-alanyl-D-alanine + UMP. It functions in the pathway cell wall biogenesis; peptidoglycan biosynthesis. Functionally, catalyzes the initial step of the lipid cycle reactions in the biosynthesis of the cell wall peptidoglycan: transfers peptidoglycan precursor phospho-MurNAc-pentapeptide from UDP-MurNAc-pentapeptide onto the lipid carrier undecaprenyl phosphate, yielding undecaprenyl-pyrophosphoryl-MurNAc-pentapeptide, known as lipid I. In Bacillus licheniformis (strain ATCC 14580 / DSM 13 / JCM 2505 / CCUG 7422 / NBRC 12200 / NCIMB 9375 / NCTC 10341 / NRRL NRS-1264 / Gibson 46), this protein is Phospho-N-acetylmuramoyl-pentapeptide-transferase.